Reading from the N-terminus, the 264-residue chain is 3-methyl-2-oxobutanoate hydroxymethyltransferase (264 aa).

Mg(2+)-binding residues include aspartate 45 and aspartate 84. 3-methyl-2-oxobutanoate-binding positions include 45 to 46 (DS), aspartate 84, and lysine 112. Mg(2+) is bound at residue glutamate 114. Glutamate 181 functions as the Proton acceptor in the catalytic mechanism.

It belongs to the PanB family. Homodecamer; pentamer of dimers. Mg(2+) is required as a cofactor.

It localises to the cytoplasm. It carries out the reaction 3-methyl-2-oxobutanoate + (6R)-5,10-methylene-5,6,7,8-tetrahydrofolate + H2O = 2-dehydropantoate + (6S)-5,6,7,8-tetrahydrofolate. It functions in the pathway cofactor biosynthesis; (R)-pantothenate biosynthesis; (R)-pantoate from 3-methyl-2-oxobutanoate: step 1/2. In terms of biological role, catalyzes the reversible reaction in which hydroxymethyl group from 5,10-methylenetetrahydrofolate is transferred onto alpha-ketoisovalerate to form ketopantoate. This chain is 3-methyl-2-oxobutanoate hydroxymethyltransferase, found in Shigella flexneri serotype 5b (strain 8401).